A 153-amino-acid chain; its full sequence is Putative ATP synthase subunit f, mitochondrial (153 aa).

Belongs to the ATPase F chain family. As to quaternary structure, subunit of the F-type ATPase which has 2 components, CF(1) - the catalytic core - and CF(0) - the membrane proton channel.

It is found in the mitochondrion membrane. In terms of biological role, mitochondrial membrane ATP synthase (F(1)F(0) ATP synthase or Complex V) produces ATP from ADP in the presence of a proton gradient across the membrane which is generated by electron transport complexes of the respiratory chain. F-type ATPases consist of two structural domains, F(1) - containing the extramembraneous catalytic core and F(0) - containing the membrane proton channel, linked together by a central stalk and a peripheral stalk. During catalysis, ATP synthesis in the catalytic domain of F(1) is coupled via a rotary mechanism of the central stalk subunits to proton translocation. Part of the complex F(0) domain. Minor subunit located with subunit a in the membrane. The polypeptide is Putative ATP synthase subunit f, mitochondrial (Caenorhabditis elegans).